We begin with the raw amino-acid sequence, 964 residues long: Isoleucine--tRNA ligase (964 aa).

Residues 66–76 (PYANGDIHIGH) carry the 'HIGH' region motif. Glutamate 596 lines the L-isoleucyl-5'-AMP pocket. Residues 637–641 (KMSKS) carry the 'KMSKS' region motif. Lysine 640 is a binding site for ATP. Zn(2+)-binding residues include cysteine 927, cysteine 930, cysteine 947, and cysteine 950.

Belongs to the class-I aminoacyl-tRNA synthetase family. IleS type 1 subfamily. In terms of assembly, monomer. Zn(2+) is required as a cofactor.

It is found in the cytoplasm. It catalyses the reaction tRNA(Ile) + L-isoleucine + ATP = L-isoleucyl-tRNA(Ile) + AMP + diphosphate. Functionally, catalyzes the attachment of isoleucine to tRNA(Ile). As IleRS can inadvertently accommodate and process structurally similar amino acids such as valine, to avoid such errors it has two additional distinct tRNA(Ile)-dependent editing activities. One activity is designated as 'pretransfer' editing and involves the hydrolysis of activated Val-AMP. The other activity is designated 'posttransfer' editing and involves deacylation of mischarged Val-tRNA(Ile). The protein is Isoleucine--tRNA ligase of Cupriavidus necator (strain ATCC 17699 / DSM 428 / KCTC 22496 / NCIMB 10442 / H16 / Stanier 337) (Ralstonia eutropha).